Reading from the N-terminus, the 424-residue chain is MKLEMICTGEEVLAGQIVDTNAAWFGNTMMEHGIECQRRVTVGDRLEDLVSVFKERSHEADVILVNGGLGPTSDDLSAEAMSLAKGEALVENEIWRERLENWFTRNGRVMALSNLKQAMLPESAIMIDNPVGTACGFAVKLNRAWLFFTPGVPFEFKQMVYEQFIPFVKQRFDIAGDVALRKLLTLGQGESSLADTLEQIDLPSGITIGYRSFMPHIEIKLFARGVGAIAQLDRLEAQIRFLLGNAIVACDRKSLAEEIHSLMVNSGLSLSTAESCTGGMIASQLIDLSGSSSYLDQGLVTYSNESKVRVLGVKPETLDDHGAVSIATVEEMAKGVRSILNSDFALATSGIAGPTGGTDDKPVGTVAIALATKGGVYSQMIKLPRRSRELVRSLSTAVAFDMLRRELLGEAVIVDYGSIGRFQK.

It belongs to the CinA family.

The chain is CinA-like protein from Shewanella pealeana (strain ATCC 700345 / ANG-SQ1).